We begin with the raw amino-acid sequence, 153 residues long: Acetylacetone-cleaving enzyme (153 aa).

As to quaternary structure, homotetramer. It depends on Fe cation as a cofactor.

The enzyme catalyses acetylacetone + O2 = methylglyoxal + acetate + H(+). The protein operates within xenobiotic degradation; acetylacetone degradation. In terms of biological role, cleaves acetylacetone to equimolar amounts of methylglyoxal and acetate, consuming one equivalent of molecular oxygen. The sequence is that of Acetylacetone-cleaving enzyme (dke1) from Acinetobacter johnsonii.